The following is a 211-amino-acid chain: Thymidylate kinase (211 aa).

10 to 17 (GPDGAGKT) lines the ATP pocket.

Belongs to the thymidylate kinase family.

It catalyses the reaction dTMP + ATP = dTDP + ADP. Functionally, phosphorylation of dTMP to form dTDP in both de novo and salvage pathways of dTTP synthesis. In Lactococcus lactis subsp. lactis (strain IL1403) (Streptococcus lactis), this protein is Thymidylate kinase (tmk).